Reading from the N-terminus, the 330-residue chain is Cathepsin K (330 aa).

A signal peptide spans 1–16 (MWGLKVVLLLPVMSSA). Residues 17–115 (LYPEEILDTQ…TLYIPDWEGR (99 aa)) constitute a propeptide, activation peptide. Asparagine 104 carries N-linked (GlcNAc...) asparagine glycosylation. 3 disulfides stabilise this stretch: cysteine 137/cysteine 178, cysteine 171/cysteine 211, and cysteine 270/cysteine 319. Cysteine 140 is a catalytic residue. Residues histidine 277 and asparagine 297 contribute to the active site.

The protein belongs to the peptidase C1 family. As to expression, expressed in the thyroid epithelial cells.

It is found in the lysosome. The protein resides in the secreted. It localises to the apical cell membrane. It carries out the reaction Broad proteolytic activity. With small-molecule substrates and inhibitors, the major determinant of specificity is P2, which is preferably Leu, Met &gt; Phe, and not Arg.. In terms of biological role, thiol protease involved in osteoclastic bone resorption and may participate partially in the disorder of bone remodeling. Displays potent endoprotease activity against fibrinogen at acid pH. May play an important role in extracellular matrix degradation. Involved in the release of thyroid hormone thyroxine (T4) by limited proteolysis of TG/thyroglobulin in the thyroid follicle lumen. This chain is Cathepsin K (CTSK), found in Sus scrofa (Pig).